The primary structure comprises 74 residues: Protein krueppel (74 aa).

4 C2H2-type zinc fingers span residues 1-4, 10-32, 38-60, and 66-74; these read ERTH, FKCP…MRLH, YHCS…LRVH, and YTCEICKAK.

It belongs to the krueppel C2H2-type zinc-finger protein family.

It is found in the nucleus. Functionally, krueppel is a gap class segmentation protein. This is Protein krueppel (Kr) from Bradysia coprophila (Dark-winged fungus gnat).